The chain runs to 503 residues: Potassium voltage-gated channel subfamily V member 1 (503 aa).

2 disordered regions span residues 1–20 and 171–192; these read MDLS…DSGS and KKDT…KGPC. Over 3–213 the chain is Cytoplasmic; sequence LSPRNRPLLD…EKPGSSTAAR (211 aa). Low complexity predominate over residues 10-20; the sequence is LLDSSSLDSGS. Positions 171-187 are enriched in basic and acidic residues; it reads KKDTDDQESQHESEQDF. A helical membrane pass occupies residues 214–234; sequence IFGVISIIFVAVSIVNMALMS. The Extracellular portion of the chain corresponds to 235–241; the sequence is AELSWLN. The chain crosses the membrane as a helical span at residues 242–262; that stretch reads LQLLEILEYVCISWFTGEFVL. Topologically, residues 263–279 are cytoplasmic; it reads RFLCVKDRCHFLRKVPN. The chain crosses the membrane as a helical span at residues 280–300; it reads IIDLLAILPFYITLLVESLSG. At 301–312 the chain is on the extracellular side; sequence SHTTQELENVGR. Residues 313–334 traverse the membrane as a helical; Voltage-sensor segment; that stretch reads LVQVLRLLRALRMLKLGRHSTG. Topologically, residues 335 to 348 are cytoplasmic; sequence LRSLGMTITQCYEE. The helical transmembrane segment at 349–369 threads the bilayer; that stretch reads VGLLLLFLSVGISIFSTIEYF. Residues 395 to 400 carry the Selectivity filter motif; that stretch reads TVGYGD. A helical transmembrane segment spans residues 410-430; it reads IVAFMCILSGILVLALPIAII. Residues 431–503 are Cytoplasmic-facing; sequence NDRFSACYFT…RSSGGDDFWF (73 aa).

The protein belongs to the potassium channel family. V (TC 1.A.1.2) subfamily. Kv8.1/KCNV1 sub-subfamily. Heteromultimer with KCNB1 and KCNB2. Interacts with KCNC4 and KCND1.

It is found in the cell membrane. In terms of biological role, potassium channel subunit that does not form functional channels by itself. Modulates KCNB1 and KCNB2 channel activity by shifting the threshold for inactivation to more negative values and by slowing the rate of inactivation. Can down-regulate the channel activity of KCNB1, KCNB2, KCNC4 and KCND1, possibly by trapping them in intracellular membranes. This chain is Potassium voltage-gated channel subfamily V member 1 (Kcnv1), found in Mus musculus (Mouse).